Consider the following 381-residue polypeptide: Complement decay-accelerating factor (381 aa).

The signal sequence occupies residues 1–34; that stretch reads MTVARPSVPAALPLLGELPRLLLLVLLCLPAVWG. 4 Sushi domains span residues 35–96, 96–160, 161–222, and 223–285; these read DCGL…FCNR, RSCE…FCKK, KSCP…ECRE, and IYCP…ECRG. Disulfide bonds link cysteine 36/cysteine 81 and cysteine 65/cysteine 94. N-linked (GlcNAc...) asparagine glycosylation is present at asparagine 95. 6 disulfides stabilise this stretch: cysteine 98/cysteine 145, cysteine 129/cysteine 158, cysteine 163/cysteine 204, cysteine 190/cysteine 220, cysteine 225/cysteine 267, and cysteine 253/cysteine 283. Residues 277–354 form a disordered region; sequence SGPPPECRGK…PNKGSGTTSG (78 aa). Residues 287–309 show a composition bias toward polar residues; it reads SLTSKVPPTVQKPTTVNVPTTEV. A compositionally biased stretch (low complexity) spans 310–328; it reads SPTSQKTTTKTTTPNAQAT. The GPI-anchor amidated serine moiety is linked to residue serine 353. Residues 354–381 constitute a propeptide, removed in mature form; the sequence is GTTRLLSGHTCFTLTGLLGTLVTMGLLT.

This sequence belongs to the receptors of complement activation (RCA) family. Monomer (major form) and non-disulfide-linked, covalent homodimer (minor form). Interacts with ADGRE5. As to quaternary structure, (Microbial infection) Interacts with coxsackievirus A21, coxsackieviruses B1, B3 and B5 capsid proteins. In terms of assembly, (Microbial infection) Interacts with human enterovirus 70 and D68 capsid proteins. (Microbial infection) Interacts with human echoviruses 6, 7, 11, 12, 20 and 21 capsid proteins. The Ser/Thr-rich domain is heavily O-glycosylated. Expressed on the plasma membranes of all cell types that are in intimate contact with plasma complement proteins. It is also found on the surfaces of epithelial cells lining extracellular compartments, and variants of the molecule are present in body fluids and in extracellular matrix.

The protein localises to the cell membrane. It is found in the secreted. Functionally, this protein recognizes C4b and C3b fragments that condense with cell-surface hydroxyl or amino groups when nascent C4b and C3b are locally generated during C4 and c3 activation. Interaction of daf with cell-associated C4b and C3b polypeptides interferes with their ability to catalyze the conversion of C2 and factor B to enzymatically active C2a and Bb and thereby prevents the formation of C4b2a and C3bBb, the amplification convertases of the complement cascade. Inhibits complement activation by destabilizing and preventing the formation of C3 and C5 convertases, which prevents complement damage. In terms of biological role, (Microbial infection) Acts as a receptor for Coxsackievirus A21, coxsackieviruses B1, B3 and B5. Its function is as follows. (Microbial infection) Acts as a receptor for Human enterovirus 70 and D68. (Microbial infection) Acts as a receptor for Human echoviruses 6, 7, 11, 12, 20 and 21. In Homo sapiens (Human), this protein is Complement decay-accelerating factor (CD55).